Consider the following 90-residue polypeptide: C-C motif chemokine 4 homolog (90 aa).

The first 21 residues, Met-1–Ala-21, serve as a signal peptide directing secretion. 2 cysteine pairs are disulfide-bonded: Cys-32–Cys-56 and Cys-33–Cys-72.

This sequence belongs to the intercrine beta (chemokine CC) family. As to quaternary structure, homodimer.

It localises to the secreted. Monokine with inflammatory and chemokinetic properties. In Gallus gallus (Chicken), this protein is C-C motif chemokine 4 homolog (CCL4).